The sequence spans 391 residues: 8-amino-7-oxononanoate synthase (391 aa).

Arginine 24 serves as a coordination point for substrate. 112 to 113 (GY) is a pyridoxal 5'-phosphate binding site. A substrate-binding site is contributed by histidine 137. Serine 183, histidine 211, and threonine 240 together coordinate pyridoxal 5'-phosphate. Position 243 is an N6-(pyridoxal phosphate)lysine (lysine 243). Position 357 (threonine 357) interacts with substrate.

This sequence belongs to the class-II pyridoxal-phosphate-dependent aminotransferase family. BioF subfamily. Homodimer. The cofactor is pyridoxal 5'-phosphate.

The enzyme catalyses 6-carboxyhexanoyl-[ACP] + L-alanine + H(+) = (8S)-8-amino-7-oxononanoate + holo-[ACP] + CO2. Its pathway is cofactor biosynthesis; biotin biosynthesis. Functionally, catalyzes the decarboxylative condensation of pimeloyl-[acyl-carrier protein] and L-alanine to produce 8-amino-7-oxononanoate (AON), [acyl-carrier protein], and carbon dioxide. The protein is 8-amino-7-oxononanoate synthase of Alkalilimnicola ehrlichii (strain ATCC BAA-1101 / DSM 17681 / MLHE-1).